Reading from the N-terminus, the 573-residue chain is Zinc finger protein 10 (573 aa).

The KRAB domain maps to 14–85 (VTFKDVFVDF…EREIHQETHP (72 aa)). Residues 206-232 (DSCASNSNECGQTFCQNIHLIQFARTH) form a C2H2-type 1; atypical zinc finger. 9 consecutive C2H2-type zinc fingers follow at residues 265–287 (YECK…QLIH), 293–315 (YECK…QKTH), 321–343 (YECK…QRTH), 349–371 (YTCN…QRTH), 377–399 (YECP…QRTH), 405–427 (YECN…HRIH), 433–455 (FECK…QRTH), 461–483 (YECH…QRIH), and 489–511 (YECC…QRIH). The C2H2-type 11; atypical zinc-finger motif lies at 517 to 539 (YKCNQCGIIFSQNSPFIVHQIAH).

It belongs to the krueppel C2H2-type zinc-finger protein family. Interacts (via the KRAB domain) with TRIM28 (via the RBCC domain).

Its subcellular location is the nucleus. Functionally, may be involved in transcriptional regulation. This is Zinc finger protein 10 (ZNF10) from Homo sapiens (Human).